An 83-amino-acid chain; its full sequence is Mu-theraphotoxin-Hhn2j 1 (83 aa).

Positions 1–21 are cleaved as a signal peptide; that stretch reads MKASMFLALAGLVLLFVVGYA. Positions 22-48 are excised as a propeptide; the sequence is SESEEKEFPIELLSKIFAVDVFKGEER. 3 disulfides stabilise this stretch: Cys-50–Cys-65, Cys-57–Cys-70, and Cys-64–Cys-77. Residue Leu-81 is modified to Leucine amide.

It belongs to the neurotoxin 10 (Hwtx-1) family. 15 (Hntx-3) subfamily. Monomer. As to expression, expressed by the venom gland.

It localises to the secreted. Its function is as follows. Lethal neurotoxin. Selectively blocks tetrodotoxin-sensitive voltage-gated sodium channels (Nav). Does not affect tetrodotoxin-resistant voltage-gated sodium channels or calcium channels. In Cyriopagopus hainanus (Chinese bird spider), this protein is Mu-theraphotoxin-Hhn2j 1.